We begin with the raw amino-acid sequence, 327 residues long: Lipoyl synthase (327 aa).

[4Fe-4S] cluster contacts are provided by cysteine 72, cysteine 77, cysteine 83, cysteine 98, cysteine 102, cysteine 105, and serine 313. Residues 83–302 enclose the Radical SAM core domain; sequence CWSHGTATIM…RRVGLEKGFL (220 aa).

This sequence belongs to the radical SAM superfamily. Lipoyl synthase family. It depends on [4Fe-4S] cluster as a cofactor.

It is found in the cytoplasm. It carries out the reaction [[Fe-S] cluster scaffold protein carrying a second [4Fe-4S](2+) cluster] + N(6)-octanoyl-L-lysyl-[protein] + 2 oxidized [2Fe-2S]-[ferredoxin] + 2 S-adenosyl-L-methionine + 4 H(+) = [[Fe-S] cluster scaffold protein] + N(6)-[(R)-dihydrolipoyl]-L-lysyl-[protein] + 4 Fe(3+) + 2 hydrogen sulfide + 2 5'-deoxyadenosine + 2 L-methionine + 2 reduced [2Fe-2S]-[ferredoxin]. Its pathway is protein modification; protein lipoylation via endogenous pathway; protein N(6)-(lipoyl)lysine from octanoyl-[acyl-carrier-protein]: step 2/2. Its function is as follows. Catalyzes the radical-mediated insertion of two sulfur atoms into the C-6 and C-8 positions of the octanoyl moiety bound to the lipoyl domains of lipoate-dependent enzymes, thereby converting the octanoylated domains into lipoylated derivatives. The polypeptide is Lipoyl synthase (Francisella philomiragia subsp. philomiragia (strain ATCC 25017 / CCUG 19701 / FSC 153 / O#319-036)).